The sequence spans 452 residues: mRNA export factor ICP27 homolog (452 aa).

Residues 42 to 164 (EAIGSTPGED…RNDQTHDESY (123 aa)) form a disordered region. A compositionally biased stretch (basic and acidic residues) spans 98-107 (SNHHGGRDVE). Basic residues predominate over residues 129–144 (SRKHRDRSLSNRRRRP). A compositionally biased stretch (basic and acidic residues) spans 154–164 (ERNDQTHDESY). Positions 335, 417, 421, and 426 each coordinate Zn(2+). The CHC2-type zinc-finger motif lies at 335–426 (CLLLNRDNDL…HQRECGRVEC (92 aa)).

The protein belongs to the HHV-1 ICP27 protein family. As to quaternary structure, homodimer. Homodimerization is required for transactivation. Associates in a complex with RNA, and host export factors NXF1/TAP and ALYREF; these interactions allow nuclear export of viral transcripts. Interacts with three host shuttling SR proteins SRSF1, SRSF3 and SRSF7. Interacts with host SRPK1. Interacts with IE62; this interaction enhances IE62 transactivation. In terms of processing, phosphorylated in vitro by SRPK1.

The protein resides in the host cytoplasm. It localises to the host nucleus. Its function is as follows. Multifunctional regulator of the expression of viral genes that mediates nuclear export of viral intronless mRNAs. This immediate early (EI) protein promotes the nuclear export of viral intronless mRNAs by interacting with mRNAs and host NXF1/TAP. The polypeptide is mRNA export factor ICP27 homolog (Varicella-zoster virus (strain Dumas) (HHV-3)).